The chain runs to 1112 residues: DNA repair protein rad13 (1112 aa).

The segment at 1–95 (MGVSGLWDIL…QTIQKRQARR (95 aa)) is N-domain. Mg(2+) is bound by residues aspartate 30 and aspartate 77. One can recognise a UIM domain in the interval 395 to 414 (TDDLILQLATQQSLEENKKS). The segment at 742–870 (KRSEKRDADE…LALEILHEFP (129 aa)) is I-domain. Residues glutamate 777, glutamate 779, aspartate 798, aspartate 800, and aspartate 849 each contribute to the Mg(2+) site. Residues 1056 to 1112 (KMMASKNSSDSDSDSEDNFLASLTPKTNSSSISIENLPRKTKLSTSLLKKPSKRRRK) are disordered. The span at 1079 to 1089 (TPKTNSSSISI) shows a compositional bias: polar residues.

This sequence belongs to the XPG/RAD2 endonuclease family. XPG subfamily. Requires Mg(2+) as cofactor.

Its subcellular location is the nucleus. In terms of biological role, single-stranded DNA endonuclease involved in excision repair of DNA damaged with UV light, bulky adducts, or cross-linking agents. Essential for the incision step of excision-repair. This Schizosaccharomyces pombe (strain 972 / ATCC 24843) (Fission yeast) protein is DNA repair protein rad13 (rad13).